The chain runs to 323 residues: Ribose-phosphate pyrophosphokinase 2 (323 aa).

Residues 43-45 and 102-103 contribute to the ATP site; these read DGE and RQ. Residues His136 and Asp177 each coordinate Mg(2+). Lys200 is an active-site residue. Residues Arg202, Asp226, and 230-234 contribute to the D-ribose 5-phosphate site; that span reads DTAGT.

It belongs to the ribose-phosphate pyrophosphokinase family. Class I subfamily. In terms of assembly, homohexamer. Requires Mg(2+) as cofactor.

Its subcellular location is the cytoplasm. It catalyses the reaction D-ribose 5-phosphate + ATP = 5-phospho-alpha-D-ribose 1-diphosphate + AMP + H(+). It functions in the pathway metabolic intermediate biosynthesis; 5-phospho-alpha-D-ribose 1-diphosphate biosynthesis; 5-phospho-alpha-D-ribose 1-diphosphate from D-ribose 5-phosphate (route I): step 1/1. Functionally, involved in the biosynthesis of the central metabolite phospho-alpha-D-ribosyl-1-pyrophosphate (PRPP) via the transfer of pyrophosphoryl group from ATP to 1-hydroxyl of ribose-5-phosphate (Rib-5-P). This chain is Ribose-phosphate pyrophosphokinase 2, found in Enterococcus faecalis (strain ATCC 700802 / V583).